Consider the following 402-residue polypeptide: Acetate kinase (402 aa).

N13 is a Mg(2+) binding site. Residue K20 coordinates ATP. Substrate is bound at residue R94. The active-site Proton donor/acceptor is D151. Residues 211–215 (HLGNG), 285–287 (DFR), and 333–337 (GVGEN) contribute to the ATP site. E387 contacts Mg(2+).

It belongs to the acetokinase family. As to quaternary structure, homodimer. Requires Mg(2+) as cofactor. It depends on Mn(2+) as a cofactor.

Its subcellular location is the cytoplasm. It catalyses the reaction acetate + ATP = acetyl phosphate + ADP. Its pathway is metabolic intermediate biosynthesis; acetyl-CoA biosynthesis; acetyl-CoA from acetate: step 1/2. Catalyzes the formation of acetyl phosphate from acetate and ATP. Can also catalyze the reverse reaction. The polypeptide is Acetate kinase (Nocardia farcinica (strain IFM 10152)).